The chain runs to 275 residues: Large ribosomal subunit protein uL2cz/uL2cy (275 aa).

Disordered regions lie at residues 1–26 (MAIH…VKSN) and 224–275 (MNPV…RRTK). The segment covering 7–26 (KTSTPSTRNGTVDSRQVKSN) has biased composition (polar residues).

This sequence belongs to the universal ribosomal protein uL2 family. As to quaternary structure, part of the 50S ribosomal subunit.

Its subcellular location is the plastid. It is found in the chloroplast. This is Large ribosomal subunit protein uL2cz/uL2cy (rpl2-A) from Phaseolus angularis (Azuki bean).